A 352-amino-acid chain; its full sequence is Mitochondrial hydrolase YKR070W (352 aa).

This sequence belongs to the HAD-like hydrolase superfamily.

The protein localises to the mitochondrion. In Saccharomyces cerevisiae (strain ATCC 204508 / S288c) (Baker's yeast), this protein is Mitochondrial hydrolase YKR070W.